Here is a 293-residue protein sequence, read N- to C-terminus: Notch homolog 2 N-terminal-like protein C (293 aa).

EGF-like domains lie at 42 to 81 (PPRM…EYCQ), 82 to 120 (HRDP…EDCQ), 123 to 161 (TSHP…KECQ), and 162 to 198 (WTDA…QKCE). Disulfide bonds link Cys46–Cys59, Cys53–Cys69, Cys71–Cys80, Cys86–Cys97, Cys91–Cys108, Cys110–Cys119, Cys127–Cys139, Cys133–Cys149, Cys151–Cys160, Cys166–Cys177, Cys171–Cys186, Cys188–Cys197, Cys204–Cys216, Cys210–Cys225, Cys227–Cys236, Cys243–Cys254, and Cys248–Cys264. Asn64 carries N-linked (GlcNAc...) asparagine glycosylation. The N-linked (GlcNAc...) asparagine glycan is linked to Asn173. The EGF-like 5; calcium-binding domain maps to 200-237 (DVNECDIPGHCQHGGTCLNLPGSYQCQCLQGFTGQYCD). Positions 239-276 (LYVPCAPSPCVNGGTCRQTGDFTFECNCLPETVRRGTE) constitute an EGF-like 6 domain.

The protein belongs to the NOTCH family. Interacts with NOTCH2. Interacts with DLL1; the interaction is direct. Expressed in radial glia neural stem cells during cortical development.

It is found in the secreted. Human-specific protein that promotes neural progenitor proliferation and evolutionary expansion of the brain neocortex by regulating the Notch signaling pathway. Able to promote neural progenitor self-renewal, possibly by down-regulating neuronal differentiation genes, thereby delaying the differentiation of neuronal progenitors and leading to an overall final increase in neuronal production. Acts by enhancing the Notch signaling pathway via two different mechanisms that probably work in parallel to reach the same effect. Enhances Notch signaling pathway in a non-cell-autonomous manner via direct interaction with NOTCH2. Also promotes Notch signaling pathway in a cell-autonomous manner through inhibition of cis DLL1-NOTCH2 interactions, which promotes neuronal differentiation. This is Notch homolog 2 N-terminal-like protein C from Homo sapiens (Human).